Here is a 245-residue protein sequence, read N- to C-terminus: 1-(5-phosphoribosyl)-5-[(5-phosphoribosylamino)methylideneamino] imidazole-4-carboxamide isomerase (245 aa).

Asp-11 functions as the Proton acceptor in the catalytic mechanism. Residue Asp-132 is the Proton donor of the active site.

The protein belongs to the HisA/HisF family.

The protein localises to the cytoplasm. It catalyses the reaction 1-(5-phospho-beta-D-ribosyl)-5-[(5-phospho-beta-D-ribosylamino)methylideneamino]imidazole-4-carboxamide = 5-[(5-phospho-1-deoxy-D-ribulos-1-ylimino)methylamino]-1-(5-phospho-beta-D-ribosyl)imidazole-4-carboxamide. Its pathway is amino-acid biosynthesis; L-histidine biosynthesis; L-histidine from 5-phospho-alpha-D-ribose 1-diphosphate: step 4/9. The protein is 1-(5-phosphoribosyl)-5-[(5-phosphoribosylamino)methylideneamino] imidazole-4-carboxamide isomerase of Bacillus licheniformis (strain ATCC 14580 / DSM 13 / JCM 2505 / CCUG 7422 / NBRC 12200 / NCIMB 9375 / NCTC 10341 / NRRL NRS-1264 / Gibson 46).